The sequence spans 166 residues: Protein-export protein SecB (166 aa).

This sequence belongs to the SecB family. Homotetramer, a dimer of dimers. One homotetramer interacts with 1 SecA dimer.

Its subcellular location is the cytoplasm. Its function is as follows. One of the proteins required for the normal export of preproteins out of the cell cytoplasm. It is a molecular chaperone that binds to a subset of precursor proteins, maintaining them in a translocation-competent state. It also specifically binds to its receptor SecA. The sequence is that of Protein-export protein SecB from Actinobacillus succinogenes (strain ATCC 55618 / DSM 22257 / CCUG 43843 / 130Z).